The primary structure comprises 390 residues: Imidazolonepropionase (390 aa).

Residues H71 and H73 each coordinate Fe(3+). 2 residues coordinate Zn(2+): H71 and H73. Residues R80, Y138, and H165 each contribute to the 4-imidazolone-5-propanoate site. Y138 lines the N-formimidoyl-L-glutamate pocket. Position 228 (H228) interacts with Fe(3+). Residue H228 participates in Zn(2+) binding. Q231 contributes to the 4-imidazolone-5-propanoate binding site. D302 contributes to the Fe(3+) binding site. D302 contacts Zn(2+). N-formimidoyl-L-glutamate contacts are provided by N304 and G306. S307 contributes to the 4-imidazolone-5-propanoate binding site.

It belongs to the metallo-dependent hydrolases superfamily. HutI family. The cofactor is Zn(2+). It depends on Fe(3+) as a cofactor.

It localises to the cytoplasm. The catalysed reaction is 4-imidazolone-5-propanoate + H2O = N-formimidoyl-L-glutamate. It participates in amino-acid degradation; L-histidine degradation into L-glutamate; N-formimidoyl-L-glutamate from L-histidine: step 3/3. Catalyzes the hydrolytic cleavage of the carbon-nitrogen bond in imidazolone-5-propanoate to yield N-formimidoyl-L-glutamate. It is the third step in the universal histidine degradation pathway. The polypeptide is Imidazolonepropionase (Streptomyces griseus subsp. griseus (strain JCM 4626 / CBS 651.72 / NBRC 13350 / KCC S-0626 / ISP 5235)).